We begin with the raw amino-acid sequence, 435 residues long: Prenyltransferase nanD (435 aa).

Residue Glu101 participates in substrate binding. Arg114, Lys202, and Tyr204 together coordinate dimethylallyl diphosphate. Residue Tyr206 participates in substrate binding. The dimethylallyl diphosphate site is built by Lys280, Tyr282, Tyr364, Tyr429, and Tyr433.

It belongs to the tryptophan dimethylallyltransferase family.

It participates in secondary metabolite biosynthesis. Functionally, prenyltransferase; part of the gene cluster that mediates the biosynthesis of the benzazepine alkaloid nanangelenin A which contains an unprecedented 3,4-dihydro-1-benzazepine-2,5-dione-N-prenyl-N-acetoxy-anthranilamide scaffold. The first step of nanangelenin biosynthesis is catalyzed by the indoleamine 2,3-dioxygenase nanC which produces N-formyl-kynurenine through the catabolism of tryptophan. The two-module NRPS nanA then utilizes anthranilate (Ant) and L-kynurenine (L-Kyn) to assemble the dipeptide product nanangelenin B. The first adenylation domain of nanA (A1) loads anthranilate onto the T1 domain, while A2 loads kynurenine, generated through spontaneous nonenzymatic deformylation of the nanC-supplied N-formyl-kynurenine. The peptide bond formation between the tethered amino acids is catalyzed by the first condensation domain (C1) between anthranilate's carbonyl carbon and kynurenine's aliphatic primary amine. The second C domain (C2) catalyzes the final cyclization event between the aromatic amine of kynurenine and the tethered carbonyl carbon, yielding nanangelenin B. The terminal T3 domain enhances the catalytic efficiency of C2, suggesting the T2-tethered Ant-L-Kyn is transferred to T3 prior to cyclization by C2. Once released from nanA, nanangelenin B is then prenylated by the prenyltransferase nanD to form nanangelenin C. Nanangelenin C is then N-hydroxylated by the FAD-dependent monooxygenase nanF and further acetylated by the acetyltransferase nanB to yield nanangelenin F. Finally, the N-methyltransferase nanE methylates the amide nitrogen of 1-benzazepine to convert nanangelenin F into nanangelenin A. NanE is also able to methylate most of the intermediates of the pathway such as nanangelenin B and nanangelenin C to produce nanangelenin D and nanangelenin E, respectively. This Aspergillus nanangensis protein is Prenyltransferase nanD.